The following is a 65-amino-acid chain: Large ribosomal subunit protein uL29 (65 aa).

The protein belongs to the universal ribosomal protein uL29 family.

This chain is Large ribosomal subunit protein uL29, found in Lactobacillus johnsonii (strain CNCM I-12250 / La1 / NCC 533).